Reading from the N-terminus, the 91-residue chain is Acylphosphatase (91 aa).

The Acylphosphatase-like domain maps to 6 to 91 (CMRCYISGRV…WEDYISFDVL (86 aa)). Active-site residues include Arg-21 and Asn-39.

Belongs to the acylphosphatase family.

It catalyses the reaction an acyl phosphate + H2O = a carboxylate + phosphate + H(+). This Legionella pneumophila subsp. pneumophila (strain Philadelphia 1 / ATCC 33152 / DSM 7513) protein is Acylphosphatase (acyP).